Here is a 357-residue protein sequence, read N- to C-terminus: Isopenicillin-N N-acyltransferase (357 aa).

Positions 121 and 310 each coordinate 6-aminopenicillanate.

This sequence belongs to the peptidase C45 family. As to quaternary structure, the active form of the enzyme results from processing of the 40-kDa monomeric precursor to a heterodimer containing subunits of 11 and 29 kDa. In terms of processing, the pre-AAT protein is synthesized as 40 kDa precursor which is then self-processed into an 11 kDa (protein A) and a 29 kDa (protein B). The B protein carries AAT activity.

Its subcellular location is the peroxisome matrix. It carries out the reaction isopenicillin N + phenylacetyl-CoA + H2O = penicillin G + L-2-aminoadipate + CoA + H(+). It participates in antibiotic biosynthesis; penicillin G biosynthesis; penicillin G from L-alpha-aminoadipate and L-cysteine and L-valine: step 3/3. Functionally, isopenicillin-N N-acyltransferase; part of the gene cluster that mediates the biosynthesis of penicillin, the world's most important antibiotic. AatA catalyzes the exchange of the alpha-aminoadipyl side chain of isopenicillin N for phenylacetic acid to yield penicillin. This step occurs in the peroxisomal matrix and the penM and paaT transporters are involved in the isopenicillin N and phenylacetic acid import into the peroxisome, respectively. The penicillin biosynthesis occurs via 3 enzymatic steps, the first corresponding to the production of the tripeptide N-[(5S)-5-amino-5-carboxypentanoyl]-L-cysteinyl-D-valine (LLD-ACV or ACV) by the NRPS acvA. The tripeptide ACV is then cyclized to isopenicillin N (IPN) by the isopenicillin N synthase ipnA that forms the beta-lactam nucleus. Finally, the alpha-aminoadipyl side chain is exchanged for phenylacetic acid by the isopenicillin N acyltransferase aatA to yield penicillin in the peroxisomal matrix. The chain is Isopenicillin-N N-acyltransferase from Penicillium chrysogenum (Penicillium notatum).